A 475-amino-acid polypeptide reads, in one-letter code: ATP synthase subunit beta (475 aa).

An ATP-binding site is contributed by 152 to 159 (GGAGVGKT).

Belongs to the ATPase alpha/beta chains family. F-type ATPases have 2 components, CF(1) - the catalytic core - and CF(0) - the membrane proton channel. CF(1) has five subunits: alpha(3), beta(3), gamma(1), delta(1), epsilon(1). CF(0) has three main subunits: a(1), b(2) and c(9-12). The alpha and beta chains form an alternating ring which encloses part of the gamma chain. CF(1) is attached to CF(0) by a central stalk formed by the gamma and epsilon chains, while a peripheral stalk is formed by the delta and b chains.

The protein resides in the cell inner membrane. It catalyses the reaction ATP + H2O + 4 H(+)(in) = ADP + phosphate + 5 H(+)(out). Functionally, produces ATP from ADP in the presence of a proton gradient across the membrane. The catalytic sites are hosted primarily by the beta subunits. The chain is ATP synthase subunit beta from Wolbachia sp. subsp. Drosophila simulans (strain wRi).